A 152-amino-acid polypeptide reads, in one-letter code: TOMM20-like protein 1 (152 aa).

Residues 1 to 6 (MPSVRL) are Mitochondrial intermembrane-facing. Residues 7–27 (GVGLLAGLAAGGAVVLLSYCV) traverse the membrane as a helical segment. Residues 28–152 (YLDWRRHRDP…STEHLKDDPD (125 aa)) are Cytoplasmic-facing.

Belongs to the Tom20 family.

Its subcellular location is the mitochondrion outer membrane. This chain is TOMM20-like protein 1 (Tomm20l), found in Mus musculus (Mouse).